We begin with the raw amino-acid sequence, 208 residues long: Large ribosomal subunit protein uL4 (208 aa).

Over residues 47-58 the composition is skewed to basic and acidic residues; that stretch reads ARAARERSDVAR. The disordered stretch occupies residues 47-84; sequence ARAARERSDVARTGKKFGRQKGGGTARHGDRRAPIFIG.

This sequence belongs to the universal ribosomal protein uL4 family. Part of the 50S ribosomal subunit.

In terms of biological role, one of the primary rRNA binding proteins, this protein initially binds near the 5'-end of the 23S rRNA. It is important during the early stages of 50S assembly. It makes multiple contacts with different domains of the 23S rRNA in the assembled 50S subunit and ribosome. Functionally, forms part of the polypeptide exit tunnel. This chain is Large ribosomal subunit protein uL4, found in Sphingopyxis alaskensis (strain DSM 13593 / LMG 18877 / RB2256) (Sphingomonas alaskensis).